A 228-amino-acid chain; its full sequence is UPF0758 protein MW1604 (228 aa).

In terms of domain architecture, MPN spans 102-224 (KITQPSDVAD…FTSLVEAGYF (123 aa)). Residues H173, H175, and D186 each coordinate Zn(2+). A JAMM motif motif is present at residues 173-186 (HNHPSGDVTPSQED).

This sequence belongs to the UPF0758 family.

The chain is UPF0758 protein MW1604 from Staphylococcus aureus (strain MW2).